The sequence spans 405 residues: Putative colanic acid biosynthesis glycosyl transferase WcaC (405 aa).

It participates in slime biogenesis; slime polysaccharide biosynthesis. The protein is Putative colanic acid biosynthesis glycosyl transferase WcaC (wcaC) of Escherichia coli (strain K12).